We begin with the raw amino-acid sequence, 426 residues long: 3-phosphoshikimate 1-carboxyvinyltransferase (426 aa).

3-phosphoshikimate is bound by residues Lys-22, Ser-23, and Arg-27. Lys-22 is a phosphoenolpyruvate binding site. 2 residues coordinate phosphoenolpyruvate: Gly-96 and Arg-124. Ser-170, Ser-171, Gln-172, Ser-198, Asp-314, Asn-337, and Lys-341 together coordinate 3-phosphoshikimate. Gln-172 lines the phosphoenolpyruvate pocket. The Proton acceptor role is filled by Asp-314. 3 residues coordinate phosphoenolpyruvate: Arg-345, Arg-387, and Lys-412.

This sequence belongs to the EPSP synthase family. Monomer.

The protein localises to the cytoplasm. It carries out the reaction 3-phosphoshikimate + phosphoenolpyruvate = 5-O-(1-carboxyvinyl)-3-phosphoshikimate + phosphate. It participates in metabolic intermediate biosynthesis; chorismate biosynthesis; chorismate from D-erythrose 4-phosphate and phosphoenolpyruvate: step 6/7. Catalyzes the transfer of the enolpyruvyl moiety of phosphoenolpyruvate (PEP) to the 5-hydroxyl of shikimate-3-phosphate (S3P) to produce enolpyruvyl shikimate-3-phosphate and inorganic phosphate. The protein is 3-phosphoshikimate 1-carboxyvinyltransferase of Vibrio atlanticus (strain LGP32) (Vibrio splendidus (strain Mel32)).